A 253-amino-acid chain; its full sequence is 3-deoxy-manno-octulosonate cytidylyltransferase (253 aa).

It belongs to the KdsB family.

Its subcellular location is the cytoplasm. It catalyses the reaction 3-deoxy-alpha-D-manno-oct-2-ulosonate + CTP = CMP-3-deoxy-beta-D-manno-octulosonate + diphosphate. Its pathway is nucleotide-sugar biosynthesis; CMP-3-deoxy-D-manno-octulosonate biosynthesis; CMP-3-deoxy-D-manno-octulosonate from 3-deoxy-D-manno-octulosonate and CTP: step 1/1. It participates in bacterial outer membrane biogenesis; lipopolysaccharide biosynthesis. In terms of biological role, activates KDO (a required 8-carbon sugar) for incorporation into bacterial lipopolysaccharide in Gram-negative bacteria. The polypeptide is 3-deoxy-manno-octulosonate cytidylyltransferase (Neisseria meningitidis serogroup B (strain ATCC BAA-335 / MC58)).